A 693-amino-acid polypeptide reads, in one-letter code: Lamina-associated polypeptide 2, isoforms alpha/zeta (693 aa).

The region spanning 5–48 is the LEM-like domain; that stretch reads LEDPSVLTKDKLKSELVANNVTLPAGEQRKDVYVQLYLQHLTAR. 3 disordered regions span residues 48-113, 148-211, and 227-270; these read RNRP…DVTE, LREQ…LAST, and TRPP…KLAP. Residues 49 to 107 are linker; that stretch reads NRPPLAAGANSKGPPDFSSDEEREPTPVLGSGASVGRGRGAVGRKATKKTDKPRLEDKD. Phosphoserine occurs at positions 59, 66, and 67. Position 74 is a phosphothreonine (T74). Phosphoserine occurs at positions 79 and 82. Omega-N-methylarginine occurs at positions 85 and 87. Positions 96-105 are enriched in basic and acidic residues; sequence KKTDKPRLED. The LEM domain maps to 108 to 152; it reads DLDVTELSNEELLDQLVRYGVNPGPIVGTTRKLYEKKLLKLREQG. A Phosphothreonine modification is found at T153. The segment covering 154-177 has biased composition (polar residues); it reads ESRSSTPLPTVSSSAENTRQNGSN. A phosphoserine mark is found at S155 and S158. 2 positions are modified to phosphothreonine: T159 and T163. Phosphoserine is present on residues S165 and S167. Over residues 178-190 the composition is skewed to basic and acidic residues; it reads DSDRYSDNDEGKK. Positions 190–196 match the Nuclear localization signal motif; sequence KKEHKKV. Position 206 is an N6-acetyllysine (S206). Basic and acidic residues predominate over residues 245-254; the sequence is TKRDPPRETC. S310 bears the Phosphoserine mark. R329 carries the omega-N-methylarginine modification. The interval 332 to 351 is disordered; that stretch reads KSRAQPLRAEEPGVSDQSVF. Phosphoserine occurs at positions 349, 352, 368, 420, and 422. Over residues 412 to 422 the composition is skewed to low complexity; it reads QSSYQDSESLS. Residues 412-442 form a disordered region; sequence QSSYQDSESLSPPRKVPRLSEKPARGGDSGS. The stretch at 557–656 forms a coiled coil; that stretch reads TESCDKHLDL…MGRRYLWLKD (100 aa). K655 carries the post-translational modification N6-acetyllysine.

This sequence belongs to the LEM family. In terms of assembly, homooligomer. Interacts with LMNA, BANF1 and RB1 and with chromosomes. Associates directly or indirectly with lamins at specific cell-cycle stages. Interacts with CMTM6. Phosphorylated in a mitose-specific manner.

Its subcellular location is the nucleus. The protein resides in the chromosome. In terms of biological role, may be involved in the structural organization of the nucleus and in the post-mitotic nuclear assembly. Plays an important role, together with LMNA, in the nuclear anchorage of RB1. This is Lamina-associated polypeptide 2, isoforms alpha/zeta (Tmpo) from Mus musculus (Mouse).